Reading from the N-terminus, the 845-residue chain is Protein P (845 aa).

The terminal protein domain (TP) stretch occupies residues 1–179 (MPLSYQHFRK…FCGSPYSWEQ (179 aa)). Positions 180–348 (ELHHGRSVTK…YCLSHLVNLL (169 aa)) are spacer. Disordered regions lie at residues 186–205 (SVTKTSQRHGDESFCSQPSG), 222–245 (QPRLGLQPHQGPLATSQSGRSGSI), and 288–318 (YSHLSTSKRQSSSGHAVEFHKVPPNSARSQS). The segment covering 289-301 (SHLSTSKRQSSSG) has biased composition (polar residues). Residues 349–692 (EDWGPCADHG…YMNLYPVARQ (344 aa)) form a polymerase/reverse transcriptase domain (RT) region. Positions 359-602 (EHHIRIPRTP…YSLNFMGYII (244 aa)) constitute a Reverse transcriptase domain. Mg(2+) is bound by residues aspartate 431, aspartate 553, and aspartate 554.

The protein belongs to the hepadnaviridae P protein family.

It catalyses the reaction DNA(n) + a 2'-deoxyribonucleoside 5'-triphosphate = DNA(n+1) + diphosphate. The catalysed reaction is Endonucleolytic cleavage to 5'-phosphomonoester.. Its activity is regulated as follows. Activated by host HSP70 and HSP40 in vitro to be able to bind the epsilon loop of the pgRNA. Because deletion of the RNase H region renders the protein partly chaperone-independent, the chaperones may be needed indirectly to relieve occlusion of the RNA-binding site by this domain. Inhibited by several reverse-transcriptase inhibitors: Lamivudine, Adefovir and Entecavir. Functionally, multifunctional enzyme that converts the viral RNA genome into dsDNA in viral cytoplasmic capsids. This enzyme displays a DNA polymerase activity that can copy either DNA or RNA templates, and a ribonuclease H (RNase H) activity that cleaves the RNA strand of RNA-DNA heteroduplexes in a partially processive 3'- to 5'-endonucleasic mode. Neo-synthesized pregenomic RNA (pgRNA) are encapsidated together with the P protein, and reverse-transcribed inside the nucleocapsid. Initiation of reverse-transcription occurs first by binding the epsilon loop on the pgRNA genome, and is initiated by protein priming, thereby the 5'-end of (-)DNA is covalently linked to P protein. Partial (+)DNA is synthesized from the (-)DNA template and generates the relaxed circular DNA (RC-DNA) genome. After budding and infection, the RC-DNA migrates in the nucleus, and is converted into a plasmid-like covalently closed circular DNA (cccDNA). The activity of P protein does not seem to be necessary for cccDNA generation, and is presumably released from (+)DNA by host nuclear DNA repair machinery. The chain is Protein P from Hepatitis B virus genotype A3 (isolate Cameroon/CMR711/1994) (HBV-A).